The chain runs to 391 residues: Testis-expressed protein 9 (391 aa).

Disordered regions lie at residues Met1–Asp31 and Gln65–Tyr85. The stretch at Ile188–Gly351 forms a coiled coil.

The protein localises to the cytoplasm. Its subcellular location is the cytoskeleton. It is found in the microtubule organizing center. It localises to the centrosome. The protein resides in the centriolar satellite. The chain is Testis-expressed protein 9 (TEX9) from Homo sapiens (Human).